The chain runs to 160 residues: Small ribosomal subunit protein uS19 (160 aa).

It belongs to the universal ribosomal protein uS19 family.

Protein S19 forms a complex with S13 that binds strongly to the 16S ribosomal RNA. The polypeptide is Small ribosomal subunit protein uS19 (Pyrobaculum islandicum (strain DSM 4184 / JCM 9189 / GEO3)).